A 184-amino-acid chain; its full sequence is Endothelial cell-specific molecule 1 (184 aa).

The first 21 residues, 1–21 (MKSLLLLTTLLVPLHLGMAWS), serve as a signal peptide directing secretion. The region spanning 24 to 102 (YAVDCPEHCD…GDEFGICKDC (79 aa)) is the IGFBP N-terminal domain. 6 cysteine pairs are disulfide-bonded: C28–C51, C32–C53, C37–C54, C43–C57, C65–C83, and C77–C99. The disordered stretch occupies residues 145–184 (RTSASHTERDSASGDGNAVREEIGEGNAARPSVMKWLNPR). The span at 150–167 (HTERDSASGDGNAVREEI) shows a compositional bias: basic and acidic residues. A glycan (O-linked (Xyl...) (chondroitin sulfate) serine) is linked at S157.

O-glycosylated; contains chondroitin sulfate and dermatan sulfate.

It is found in the secreted. Its function is as follows. Involved in angiogenesis; promotes angiogenic sprouting. May have potent implications in lung endothelial cell-leukocyte interactions. This is Endothelial cell-specific molecule 1 (Esm1) from Mus musculus (Mouse).